The primary structure comprises 58 residues: MSNTTRVRKNESLEDALRRFKRSVSKSGTLQEYRKREHYEKPSVKRKKKSEAARKRKF.

The segment at 25 to 58 (SKSGTLQEYRKREHYEKPSVKRKKKSEAARKRKF) is disordered. Residues 32 to 43 (EYRKREHYEKPS) are compositionally biased toward basic and acidic residues. Over residues 44-58 (VKRKKKSEAARKRKF) the composition is skewed to basic residues.

The protein belongs to the bacterial ribosomal protein bS21 family.

This Oceanobacillus iheyensis (strain DSM 14371 / CIP 107618 / JCM 11309 / KCTC 3954 / HTE831) protein is Small ribosomal subunit protein bS21.